The following is a 335-amino-acid chain: Fructose-1,6-bisphosphatase class 1 (335 aa).

4 residues coordinate Mg(2+): Glu-92, Asp-114, Leu-116, and Asp-117. Substrate is bound by residues 117-120, Asn-209, and Lys-275; that span reads DGSS. Mg(2+) is bound at residue Glu-281.

This sequence belongs to the FBPase class 1 family. In terms of assembly, homotetramer. It depends on Mg(2+) as a cofactor.

The protein resides in the cytoplasm. The enzyme catalyses beta-D-fructose 1,6-bisphosphate + H2O = beta-D-fructose 6-phosphate + phosphate. It functions in the pathway carbohydrate biosynthesis; gluconeogenesis. This chain is Fructose-1,6-bisphosphatase class 1, found in Verminephrobacter eiseniae (strain EF01-2).